Here is a 92-residue protein sequence, read N- to C-terminus: Kinetoplastid membrane protein 11 (92 aa).

This sequence belongs to the KMP-11 family. As to quaternary structure, monomer.

It localises to the cytoplasm. Its subcellular location is the cytoskeleton. In terms of biological role, may be involved in the regulation of the cytoskeleton through interaction with the subpellicular microtubules. May be involved in parasite mobility and attachment to the surface of the host cell. Behaves as a strong immunogen during infection. The chain is Kinetoplastid membrane protein 11 (KMP-11/1) from Trypanosoma brucei brucei.